The chain runs to 82 residues: Small ribosomal subunit protein uS17c (82 aa).

It belongs to the universal ribosomal protein uS17 family. As to quaternary structure, part of the 30S ribosomal subunit.

It localises to the plastid. The protein resides in the chloroplast. One of the primary rRNA binding proteins, it binds specifically to the 5'-end of 16S ribosomal RNA. The protein is Small ribosomal subunit protein uS17c (rps17) of Cyanidioschyzon merolae (strain NIES-3377 / 10D) (Unicellular red alga).